Consider the following 138-residue polypeptide: MSSKVGGGKGGKSKTSSEAKVLTTRSSKAGLQFPVGRIHRFLRNKNANNVRIGAKAAVYVASIMEYLTAEVLELAGNAAKDLRVKRITPRHLQLAIRGDEELDLLIRATIAGGGVLPHIHKSLVAKNAPLKKPKALDA.

The span at methionine 1 to glycine 10 shows a compositional bias: gly residues. Residues methionine 1–valine 21 are disordered. 2 positions are modified to N6-acetyllysine: lysine 4 and lysine 9.

Belongs to the histone H2A family. As to quaternary structure, the nucleosome is a histone octamer containing two molecules each of H2A, H2B, H3 and H4 assembled in one H3-H4 heterotetramer and two H2A-H2B heterodimers. The octamer wraps approximately 147 bp of DNA. H2A or its variant H2A.Z forms a heterodimer with H2B. H2A.Z associates with the VPS72/SWC2 subunit of the SWR1 chromatin remodeling complex. Also interacts with RBP1/DNA-directed RNA polymerase II largest subunit. Acetylated once deposited into chromatin.

The protein resides in the nucleus. It localises to the chromosome. In terms of biological role, variant histone H2A which can replace H2A in some nucleosomes. Nucleosomes wrap and compact DNA into chromatin, limiting DNA accessibility to the cellular machineries which require DNA as a template. Histones thereby play a central role in transcription regulation, DNA repair, DNA replication and chromosomal stability. DNA accessibility is regulated via a complex set of post-translational modifications of histones, also called histone code, and nucleosome remodeling. This variant is enriched at promoters, it may keep them in a repressed state until the appropriate activation signal is received. Near telomeres, it may counteract gene silencing caused by the spread of heterochromatin proteins. Required for the RNA polymerase II and SPT15/TBP recruitment to the target genes. Involved in chromosome stability. This chain is Histone H2A.Z (HTZ1), found in Cryptococcus neoformans var. neoformans serotype D (strain B-3501A) (Filobasidiella neoformans).